Reading from the N-terminus, the 157-residue chain is SsrA-binding protein (157 aa).

This sequence belongs to the SmpB family.

The protein resides in the cytoplasm. Required for rescue of stalled ribosomes mediated by trans-translation. Binds to transfer-messenger RNA (tmRNA), required for stable association of tmRNA with ribosomes. tmRNA and SmpB together mimic tRNA shape, replacing the anticodon stem-loop with SmpB. tmRNA is encoded by the ssrA gene; the 2 termini fold to resemble tRNA(Ala) and it encodes a 'tag peptide', a short internal open reading frame. During trans-translation Ala-aminoacylated tmRNA acts like a tRNA, entering the A-site of stalled ribosomes, displacing the stalled mRNA. The ribosome then switches to translate the ORF on the tmRNA; the nascent peptide is terminated with the 'tag peptide' encoded by the tmRNA and targeted for degradation. The ribosome is freed to recommence translation, which seems to be the essential function of trans-translation. The polypeptide is SsrA-binding protein (Limosilactobacillus fermentum (strain NBRC 3956 / LMG 18251) (Lactobacillus fermentum)).